A 457-amino-acid chain; its full sequence is Bifunctional protein GlmU (457 aa).

The interval 1-230 is pyrophosphorylase; sequence MSKRYAVVLA…FEESLGVNDR (230 aa). Residues 9–12, Lys-23, Gln-73, and 78–79 contribute to the UDP-N-acetyl-alpha-D-glucosamine site; these read LAAG and GT. Residue Asp-103 coordinates Mg(2+). UDP-N-acetyl-alpha-D-glucosamine is bound by residues Gly-140, Glu-155, Asn-170, and Asn-228. Asn-228 is a binding site for Mg(2+). Positions 231-251 are linker; it reads IALAEASKLMQRRINDNHMRN. An N-acetyltransferase region spans residues 252-457; the sequence is GVTLVNPENT…DYAKRLNHGK (206 aa). The UDP-N-acetyl-alpha-D-glucosamine site is built by Arg-333 and Lys-351. His-363 acts as the Proton acceptor in catalysis. Residues Tyr-366 and Asn-377 each coordinate UDP-N-acetyl-alpha-D-glucosamine. Acetyl-CoA is bound by residues 386–387, Ala-423, and Arg-440; that span reads NY.

The protein in the N-terminal section; belongs to the N-acetylglucosamine-1-phosphate uridyltransferase family. In the C-terminal section; belongs to the transferase hexapeptide repeat family. In terms of assembly, homotrimer. The cofactor is Mg(2+).

It localises to the cytoplasm. The catalysed reaction is alpha-D-glucosamine 1-phosphate + acetyl-CoA = N-acetyl-alpha-D-glucosamine 1-phosphate + CoA + H(+). It catalyses the reaction N-acetyl-alpha-D-glucosamine 1-phosphate + UTP + H(+) = UDP-N-acetyl-alpha-D-glucosamine + diphosphate. The protein operates within nucleotide-sugar biosynthesis; UDP-N-acetyl-alpha-D-glucosamine biosynthesis; N-acetyl-alpha-D-glucosamine 1-phosphate from alpha-D-glucosamine 6-phosphate (route II): step 2/2. It functions in the pathway nucleotide-sugar biosynthesis; UDP-N-acetyl-alpha-D-glucosamine biosynthesis; UDP-N-acetyl-alpha-D-glucosamine from N-acetyl-alpha-D-glucosamine 1-phosphate: step 1/1. It participates in bacterial outer membrane biogenesis; LPS lipid A biosynthesis. Its function is as follows. Catalyzes the last two sequential reactions in the de novo biosynthetic pathway for UDP-N-acetylglucosamine (UDP-GlcNAc). The C-terminal domain catalyzes the transfer of acetyl group from acetyl coenzyme A to glucosamine-1-phosphate (GlcN-1-P) to produce N-acetylglucosamine-1-phosphate (GlcNAc-1-P), which is converted into UDP-GlcNAc by the transfer of uridine 5-monophosphate (from uridine 5-triphosphate), a reaction catalyzed by the N-terminal domain. The chain is Bifunctional protein GlmU from Listeria welshimeri serovar 6b (strain ATCC 35897 / DSM 20650 / CCUG 15529 / CIP 8149 / NCTC 11857 / SLCC 5334 / V8).